Consider the following 515-residue polypeptide: Membrane-bound lytic murein transglycosylase F (515 aa).

The signal sequence occupies residues 1–32 (MKKLKINYLFIGILTLLLAAALWPSIPWFGKA). Positions 33-269 (DNRIAAIQSR…RMEEKYLGHG (237 aa)) are non-LT domain. Residues 270–515 (DDFDYVDTRT…PFSLKKKDEN (246 aa)) are LT domain. Glutamate 314 is an active-site residue. Positions 493 to 515 (QPSSNYLSHSPSLPFSLKKKDEN) are disordered.

In the N-terminal section; belongs to the bacterial solute-binding protein 3 family. The protein in the C-terminal section; belongs to the transglycosylase Slt family.

The protein localises to the cell outer membrane. It carries out the reaction Exolytic cleavage of the (1-&gt;4)-beta-glycosidic linkage between N-acetylmuramic acid (MurNAc) and N-acetylglucosamine (GlcNAc) residues in peptidoglycan, from either the reducing or the non-reducing ends of the peptidoglycan chains, with concomitant formation of a 1,6-anhydrobond in the MurNAc residue.. Murein-degrading enzyme that degrades murein glycan strands and insoluble, high-molecular weight murein sacculi, with the concomitant formation of a 1,6-anhydromuramoyl product. Lytic transglycosylases (LTs) play an integral role in the metabolism of the peptidoglycan (PG) sacculus. Their lytic action creates space within the PG sacculus to allow for its expansion as well as for the insertion of various structures such as secretion systems and flagella. This is Membrane-bound lytic murein transglycosylase F from Citrobacter koseri (strain ATCC BAA-895 / CDC 4225-83 / SGSC4696).